We begin with the raw amino-acid sequence, 431 residues long: Protein EARLY STARVATION 1, chloroplastic (431 aa).

A chloroplast-targeting transit peptide spans Met-1–Gly-19. Disordered stretches follow at residues Gly-65–Ile-126 and Gly-403–Glu-431. A compositionally biased stretch (pro residues) spans Pro-415–Glu-431.

Belongs to the ESV1 family.

Its subcellular location is the plastid. The protein localises to the chloroplast stroma. Binds preferentially to highly ordered alpha-glucans, such as starch and crystalline maltodextrins. Involved in the organization of the starch granule matrix, thus influencing starch turnover by modulating the accessibility of starch polymers to modifying and degrading enzymes. Required for the control of starch degradation in leaves and starch distribution in nonphotosynthetic parts. Promotes gravitropic responses, negative in shoots but positive in roots, by facilitating starch granules (statoliths) formation in hypocotyls and roots columella. Facilitates tight packing of starch granules in grains. In Oryza sativa subsp. japonica (Rice), this protein is Protein EARLY STARVATION 1, chloroplastic.